A 592-amino-acid chain; its full sequence is 1,4-alpha-glucan branching enzyme GlgB 2 (592 aa).

Asp274 functions as the Nucleophile in the catalytic mechanism. The active-site Proton donor is the Glu327.

The protein belongs to the glycosyl hydrolase 13 family. GlgB subfamily. As to quaternary structure, monomer.

The catalysed reaction is Transfers a segment of a (1-&gt;4)-alpha-D-glucan chain to a primary hydroxy group in a similar glucan chain.. It participates in glycan biosynthesis; glycogen biosynthesis. Its function is as follows. Catalyzes the formation of the alpha-1,6-glucosidic linkages in glycogen by scission of a 1,4-alpha-linked oligosaccharide from growing alpha-1,4-glucan chains and the subsequent attachment of the oligosaccharide to the alpha-1,6 position. This Streptomyces avermitilis (strain ATCC 31267 / DSM 46492 / JCM 5070 / NBRC 14893 / NCIMB 12804 / NRRL 8165 / MA-4680) protein is 1,4-alpha-glucan branching enzyme GlgB 2.